A 415-amino-acid chain; its full sequence is Serine hydroxymethyltransferase (415 aa).

Residues Leu117 and 121-123 (GHL) contribute to the (6S)-5,6,7,8-tetrahydrofolate site. Lys226 carries the N6-(pyridoxal phosphate)lysine modification. (6S)-5,6,7,8-tetrahydrofolate contacts are provided by residues Glu241 and 349–351 (SPF).

The protein belongs to the SHMT family. In terms of assembly, homodimer. Requires pyridoxal 5'-phosphate as cofactor.

The protein localises to the cytoplasm. It catalyses the reaction (6R)-5,10-methylene-5,6,7,8-tetrahydrofolate + glycine + H2O = (6S)-5,6,7,8-tetrahydrofolate + L-serine. The protein operates within one-carbon metabolism; tetrahydrofolate interconversion. Its pathway is amino-acid biosynthesis; glycine biosynthesis; glycine from L-serine: step 1/1. In terms of biological role, catalyzes the reversible interconversion of serine and glycine with tetrahydrofolate (THF) serving as the one-carbon carrier. This reaction serves as the major source of one-carbon groups required for the biosynthesis of purines, thymidylate, methionine, and other important biomolecules. Also exhibits THF-independent aldolase activity toward beta-hydroxyamino acids, producing glycine and aldehydes, via a retro-aldol mechanism. The sequence is that of Serine hydroxymethyltransferase from Geotalea daltonii (strain DSM 22248 / JCM 15807 / FRC-32) (Geobacter daltonii).